Consider the following 488-residue polypeptide: Glycogen synthase (488 aa).

Arginine 20 serves as a coordination point for ADP-alpha-D-glucose.

It belongs to the glycosyltransferase 1 family. Bacterial/plant glycogen synthase subfamily.

The catalysed reaction is [(1-&gt;4)-alpha-D-glucosyl](n) + ADP-alpha-D-glucose = [(1-&gt;4)-alpha-D-glucosyl](n+1) + ADP + H(+). It functions in the pathway glycan biosynthesis; glycogen biosynthesis. In terms of biological role, synthesizes alpha-1,4-glucan chains using ADP-glucose. The protein is Glycogen synthase of Chlorobaculum parvum (strain DSM 263 / NCIMB 8327) (Chlorobium vibrioforme subsp. thiosulfatophilum).